The sequence spans 842 residues: Glycogen phosphorylase, muscle form (842 aa).

Ser2 bears the N-acetylserine mark. Ser15 carries the phosphoserine; by PHK; in form phosphorylase A modification. Residues Asp43 and Tyr76 each contribute to the AMP site. Tyr204 and Tyr227 each carry phosphotyrosine. AMP is bound at residue 310–319 (RRFKSSKFGC). Ser430 is subject to Phosphoserine. Tyr473 bears the Phosphotyrosine mark. A Phosphoserine modification is found at Ser514. Lys681 is modified (N6-(pyridoxal phosphate)lysine). Residues Ser747 and Ser748 each carry the phosphoserine modification.

It belongs to the glycogen phosphorylase family. Homodimer. Homotetramer; to form the enzymatically active phosphorylase A. The cofactor is pyridoxal 5'-phosphate. Post-translationally, phosphorylation of Ser-15 converts phosphorylase B (unphosphorylated) to phosphorylase A.

The enzyme catalyses [(1-&gt;4)-alpha-D-glucosyl](n) + phosphate = [(1-&gt;4)-alpha-D-glucosyl](n-1) + alpha-D-glucose 1-phosphate. With respect to regulation, allosterically regulated through the non-covalent binding of metabolites, being activated by AMP and inhibited by ATP, ADP, and glucose-6-phosphate. The activity is also controlled by post-translational modifications including phosphorylation. In terms of biological role, allosteric enzyme that catalyzes the rate-limiting step in glycogen catabolism, the phosphorolytic cleavage of glycogen to produce glucose-1-phosphate, and plays a central role in maintaining cellular and organismal glucose homeostasis. In Macaca fascicularis (Crab-eating macaque), this protein is Glycogen phosphorylase, muscle form.